A 366-amino-acid polypeptide reads, in one-letter code: Probable glucuronokinase 2 (366 aa).

126–136 (PRQTGLSGSSA) lines the ATP pocket. Asp-179 functions as the Proton acceptor in the catalytic mechanism.

The protein belongs to the GHMP kinase family. The cofactor is Mg(2+). Requires Mn(2+) as cofactor. Co(2+) is required as a cofactor.

The enzyme catalyses D-glucuronate + ATP = 1-phospho-alpha-D-glucuronate + ADP + H(+). Its function is as follows. Sugar-1-kinase with a strict substrate specificity for D-glucuronic acid and ATP. Involved in the biosynthesis of UDP-glucuronic acid (UDP-GlcA), providing nucleotide sugars for cell-wall polymers. May be also involved in a salvage pathway for glucuronic acid. The polypeptide is Probable glucuronokinase 2 (GLCAK2) (Arabidopsis thaliana (Mouse-ear cress)).